We begin with the raw amino-acid sequence, 160 residues long: uncharacterized protein (160 aa).

Residues 27-47 traverse the membrane as a helical segment; that stretch reads VMNSYFIAGCGPAVCYYAVSW.

The protein localises to the membrane. This is an uncharacterized protein from Homo sapiens (Human).